The sequence spans 308 residues: Malonate utilization transcriptional regulator (308 aa).

Residues 9-66 enclose the HTH lysR-type domain; it reads ITFRKLSVFMMFMAKGNIARTAEAMKLSSVSVHRALHTLEEGVGCPLFVHKGRNLLPL. The segment at residues 26 to 45 is a DNA-binding region (H-T-H motif); it reads IARTAEAMKLSSVSVHRALH.

It belongs to the LysR transcriptional regulatory family.

In terms of biological role, transcriptional regulator of the mau genes for malonate utilization. This is Malonate utilization transcriptional regulator (mauR) from Klebsiella pneumoniae.